A 298-amino-acid chain; its full sequence is 4-hydroxy-tetrahydrodipicolinate synthase (298 aa).

Residue Thr51 participates in pyruvate binding. Tyr139 acts as the Proton donor/acceptor in catalysis. Residue Lys167 is the Schiff-base intermediate with substrate of the active site. Ile209 contacts pyruvate.

It belongs to the DapA family. Homotetramer; dimer of dimers.

Its subcellular location is the cytoplasm. It catalyses the reaction L-aspartate 4-semialdehyde + pyruvate = (2S,4S)-4-hydroxy-2,3,4,5-tetrahydrodipicolinate + H2O + H(+). The protein operates within amino-acid biosynthesis; L-lysine biosynthesis via DAP pathway; (S)-tetrahydrodipicolinate from L-aspartate: step 3/4. Catalyzes the condensation of (S)-aspartate-beta-semialdehyde [(S)-ASA] and pyruvate to 4-hydroxy-tetrahydrodipicolinate (HTPA). This chain is 4-hydroxy-tetrahydrodipicolinate synthase, found in Haemophilus influenzae (strain PittEE).